The chain runs to 206 residues: MTVKKIAIFGATGRTGLTTLAQAVQAGYEVTVLVRDSSRLPSEGPQPAHVVVGDVRQAADVDKTVAGQEAVIVLLGTGNDLSPTTVMSEGTRNIVTAMKAHGVDKVVACTSAFLLWDPTKVPPRLQDVTDDHIRMHKILQESGLKYVAVMPPHIGDQPLTGAYTVTLDGRGPSRVISKHDLGHFMLRCLTTNEYDGHTTYPSHQYD.

The NADP(+) site is built by Gly-10, Thr-12, Gly-13, Thr-15, Arg-35, Ser-38, and Arg-39. The residue at position 42 (Ser-42) is a Phosphoserine. Asp-54, Val-55, Leu-75, and Gly-76 together coordinate NADP(+). Ser-82 bears the Phosphoserine mark. NADP(+)-binding residues include Met-87, Cys-109, His-132, His-153, and Ile-154. The S-nitroso-cysteine intermediate; for S-nitroso-CoA-dependent nitrosyltransferase activity role is filled by Cys-109. Residue Cys-188 is the S-nitroso-cysteine intermediate; for S-nitroso-CoA-dependent nitrosyltransferase activity of the active site.

This sequence belongs to the BLVRB family. Monomer.

It is found in the cytoplasm. It catalyses the reaction reduced riboflavin + NADP(+) = riboflavin + NADPH + 2 H(+). It carries out the reaction bilirubin IXbeta + NADP(+) = biliverdin IXbeta + NADPH + H(+). The catalysed reaction is FMNH2 + NAD(+) = FMN + NADH + 2 H(+). The enzyme catalyses FMNH2 + NADP(+) = FMN + NADPH + 2 H(+). It catalyses the reaction S-nitroso-CoA + L-cysteinyl-[protein] = S-nitroso-L-cysteinyl-[protein] + CoA. It carries out the reaction L-cysteinyl-[SCAN] + S-nitroso-CoA = S-nitroso-L-cysteinyl-[SCAN] + CoA. The catalysed reaction is S-nitroso-L-cysteinyl-[SCAN] + L-cysteinyl-[protein] = L-cysteinyl-[SCAN] + S-nitroso-L-cysteinyl-[protein]. Its function is as follows. Enzyme that can both act as a NAD(P)H-dependent reductase and a S-nitroso-CoA-dependent nitrosyltransferase. Promotes fetal heme degradation during development. Also expressed in adult tissues, where it acts as a regulator of hematopoiesis, intermediary metabolism (glutaminolysis, glycolysis, TCA cycle and pentose phosphate pathway) and insulin signaling. Has a broad specificity oxidoreductase activity by catalyzing the NAD(P)H-dependent reduction of a variety of flavins, such as riboflavin, FAD or FMN, biliverdins, methemoglobin and PQQ (pyrroloquinoline quinone). Contributes to fetal heme catabolism by catalyzing reduction of biliverdin IXbeta into bilirubin IXbeta in the liver. Biliverdin IXbeta, which constitutes the major heme catabolite in the fetus is not present in adult. Does not reduce bilirubin IXalpha. Can also reduce the complexed Fe(3+) iron to Fe(2+) in the presence of FMN and NADPH. Acts as a protein nitrosyltransferase by catalyzing nitrosylation of cysteine residues of target proteins, such as HMOX2, INSR and IRS1. S-nitroso-CoA-dependent nitrosyltransferase activity is mediated via a 'ping-pong' mechanism: BLVRB first associates with both S-nitroso-CoA and protein substrate, nitric oxide group is then transferred from S-nitroso-CoA to Cys-109 and Cys-188 residues of BLVRB and from S-nitroso-BLVRB to the protein substrate. Inhibits insulin signaling by mediating nitrosylation of INSR and IRS1, leading to their inhibition. This Mus musculus (Mouse) protein is Flavin reductase (NADPH) (Blvrb).